A 371-amino-acid chain; its full sequence is Mitogen-activated protein kinase homolog NTF6 (371 aa).

A Protein kinase domain is found at 38–324; the sequence is IPPIQPVGRG…VEDALNHPFL (287 aa). ATP-binding positions include 44 to 52 and Lys67; that span reads VGRGAYGMV. Asp164 acts as the Proton acceptor in catalysis. The residue at position 196 (Thr196) is a Phosphothreonine. The short motif at 196-198 is the TXY element; sequence TEY. At Tyr198 the chain carries Phosphotyrosine.

It belongs to the protein kinase superfamily. CMGC Ser/Thr protein kinase family. MAP kinase subfamily. Mg(2+) is required as a cofactor. Post-translationally, dually phosphorylated on Thr-196 and Tyr-198, which activates the enzyme. Very low autophosphorylation, although dramatically increased when Mn(2+) is added to the reaction instead of Mg(2+).

It carries out the reaction L-seryl-[protein] + ATP = O-phospho-L-seryl-[protein] + ADP + H(+). It catalyses the reaction L-threonyl-[protein] + ATP = O-phospho-L-threonyl-[protein] + ADP + H(+). With respect to regulation, activated by tyrosine and threonine phosphorylation. This Nicotiana tabacum (Common tobacco) protein is Mitogen-activated protein kinase homolog NTF6 (NTF6).